The primary structure comprises 126 residues: Adrenocorticotropic hormone receptor (126 aa).

Residues 1 to 25 (VLPEEIFFTISIVGVLENLIVLLAV) traverse the membrane as a helical segment. At 26 to 34 (FKNKNLQAP) the chain is on the cytoplasmic side. Residues 35-55 (MYFFICSLAISDMLGSLYKIL) form a helical membrane-spanning segment. At 56-80 (ENILIILRNMGYLKPRGSFETTADD) the chain is on the extracellular side. Residues 81–102 (IIDSLFVLSLLGAIFSLSVIAA) form a helical membrane-spanning segment. The Cytoplasmic portion of the chain corresponds to 103–123 (DRYITIFHALRYHSIVTMRRT). A helical transmembrane segment spans residues 124–126 (VVV).

It belongs to the G-protein coupled receptor 1 family. In terms of assembly, interacts with MRAP; increasing ligand-sensitivity and generation of cAMP. Interacts with MRAP2; competing with MRAP for binding to MC2R and impairing the binding of corticotropin (ACTH).

Its subcellular location is the cell membrane. Functionally, receptor for corticotropin (ACTH). This receptor is mediated by G proteins (G(s)) which activate adenylate cyclase (cAMP). The polypeptide is Adrenocorticotropic hormone receptor (MC2R) (Papio hamadryas (Hamadryas baboon)).